We begin with the raw amino-acid sequence, 449 residues long: MTTRILTGITTTGTPHLGNYAGAIRPAIRASQQPGVDSFYFLADYHALIKCDDPLRIQRSRLEIAATWLAGGLDPDKVTFYRQSDIPEIPELTWLLTCVAAKGLLNRAHAYKASVDKNVENGEDPDAGVTMGLFSYPVLMAADILMFNANKVPVGRDQIQHVEMARDIGQRFNHLFGQGKDFFALPEAVIEESVATLPGLDGRKMSKSYDNTIPLFTSAKDMKDAISRIVTDSRAPGEAKDPDNAHLFTLYQAFSTPEQCAGFREELLQGLGWGDAKQRLFQLLDGQLAEKREYYHQLIARPADLEDILLAGAAKARKIATPFLEQLREAVGLRSFRSSVQATAEVKKKATKSARFVSFRDEDGSFRFRLLAADGEQLLLSRSFADGKSAGAVSKQLQQGGEADVRIEGLSFGLWLNGEQVADGPQFDNAEARDAAIQSLNEALAPQQD.

ATP-binding positions include 10 to 12 and 18 to 19; these read TTT and GN. The 'HIGH' region motif lies at 11 to 19; the sequence is TTGTPHLGN. Asp-143 provides a ligand contact to L-tryptophan. ATP-binding positions include 155-157, Leu-197, and 204-208; these read GRD and KMSKS. Positions 204–208 match the 'KMSKS' region motif; that stretch reads KMSKS.

This sequence belongs to the class-I aminoacyl-tRNA synthetase family. Homodimer.

Its subcellular location is the cytoplasm. The enzyme catalyses tRNA(Trp) + L-tryptophan + ATP = L-tryptophyl-tRNA(Trp) + AMP + diphosphate + H(+). In terms of biological role, catalyzes the attachment of tryptophan to tRNA(Trp). This chain is Tryptophan--tRNA ligase, found in Pseudomonas putida (strain ATCC 47054 / DSM 6125 / CFBP 8728 / NCIMB 11950 / KT2440).